We begin with the raw amino-acid sequence, 341 residues long: Methionine import ATP-binding protein MetN 3 (341 aa).

The region spanning 2 to 241 (ILLENVKKIY…PQQDITKRFV (240 aa)) is the ABC transporter domain. 38–45 (GYSGAGKS) contributes to the ATP binding site.

Belongs to the ABC transporter superfamily. Methionine importer (TC 3.A.1.24) family. As to quaternary structure, the complex is composed of two ATP-binding proteins (MetN), two transmembrane proteins (MetI) and a solute-binding protein (MetQ).

The protein localises to the cell membrane. It carries out the reaction L-methionine(out) + ATP + H2O = L-methionine(in) + ADP + phosphate + H(+). The enzyme catalyses D-methionine(out) + ATP + H2O = D-methionine(in) + ADP + phosphate + H(+). Functionally, part of the ABC transporter complex MetNIQ involved in methionine import. Responsible for energy coupling to the transport system. In Bacillus anthracis, this protein is Methionine import ATP-binding protein MetN 3.